Consider the following 141-residue polypeptide: MALMQDFKKFAMRGNVIDLAVGVIIGAAFGKIVDSLVNDLIMPLVARIVGKLDFSNLFIQLADAPAGVPQTLADLKKAGVPVFAYGNFITVAVNFLILAFIVFLMVRAITRVIDTNPPPADTPENTLLLRDIRDSLKSKNQ.

The next 2 membrane-spanning stretches (helical) occupy residues Val16–Leu36 and Gly86–Val106.

The protein belongs to the MscL family. In terms of assembly, homopentamer.

Its subcellular location is the cell inner membrane. Its function is as follows. Channel that opens in response to stretch forces in the membrane lipid bilayer. May participate in the regulation of osmotic pressure changes within the cell. This is Large-conductance mechanosensitive channel from Ralstonia nicotianae (strain ATCC BAA-1114 / GMI1000) (Ralstonia solanacearum).